The primary structure comprises 108 residues: Translation initiation factor 1A (108 aa).

The S1-like domain occupies P11 to M85.

It belongs to the eIF-1A family.

Functionally, seems to be required for maximal rate of protein biosynthesis. Enhances ribosome dissociation into subunits and stabilizes the binding of the initiator Met-tRNA(I) to 40 S ribosomal subunits. The polypeptide is Translation initiation factor 1A (eIF1A) (Metallosphaera sedula (strain ATCC 51363 / DSM 5348 / JCM 9185 / NBRC 15509 / TH2)).